We begin with the raw amino-acid sequence, 353 residues long: Methionine import ATP-binding protein MetN (353 aa).

The ABC transporter domain occupies L7–V249. G41–S48 is a binding site for ATP.

The protein belongs to the ABC transporter superfamily. Methionine importer (TC 3.A.1.24) family. The complex is composed of two ATP-binding proteins (MetN), two transmembrane proteins (MetI) and a solute-binding protein (MetQ).

The protein resides in the cell membrane. It carries out the reaction L-methionine(out) + ATP + H2O = L-methionine(in) + ADP + phosphate + H(+). The enzyme catalyses D-methionine(out) + ATP + H2O = D-methionine(in) + ADP + phosphate + H(+). Its function is as follows. Part of the ABC transporter complex MetNIQ involved in methionine import. Responsible for energy coupling to the transport system. The sequence is that of Methionine import ATP-binding protein MetN from Ligilactobacillus salivarius (strain UCC118) (Lactobacillus salivarius).